A 320-amino-acid polypeptide reads, in one-letter code: MKDTTVPLTLISLLADGEFHSGEQLGERLGMSRAAINKHIQTLRDWGVDVFTVPGKGYSLPEPIQLLDADRIHSQLDSGNVAVLPVIDSTNQYLLDRIGELRSGDACVAEYQQAGRGRRGRKWFSPFGANLYLSMYWRLEQGPAAAIGLSLVIGIVMAEVLRKLGADKVRVKWPNDLYLLDRKLAGILVELTGKTGDAAQIVIGAGINMAMRRVEEDVINQGWITLQEAGITLDRNMLAAKLIYKLRAALELFEQEGLSPYLSRWKKLDNFIDRPVKLIIGDKEIFGISRGIDTQGALLLEQDGVIKPWMGGEISLRSAE.

The H-T-H motif DNA-binding region spans 22-41 (GEQLGERLGMSRAAINKHIQ). Positions 66–254 (LLDADRIHSQ…KLRAALELFE (189 aa)) constitute a BPL/LPL catalytic domain. Biotin contacts are provided by residues 89–91 (STN), Gln112, 116–118 (RGR), and Lys183.

Belongs to the biotin--protein ligase family.

The enzyme catalyses biotin + L-lysyl-[protein] + ATP = N(6)-biotinyl-L-lysyl-[protein] + AMP + diphosphate + H(+). Acts both as a biotin--[acetyl-CoA-carboxylase] ligase and a biotin-operon repressor. In the presence of ATP, BirA activates biotin to form the BirA-biotinyl-5'-adenylate (BirA-bio-5'-AMP or holoBirA) complex. HoloBirA can either transfer the biotinyl moiety to the biotin carboxyl carrier protein (BCCP) subunit of acetyl-CoA carboxylase, or bind to the biotin operator site and inhibit transcription of the operon. This chain is Bifunctional ligase/repressor BirA, found in Salmonella typhimurium (strain LT2 / SGSC1412 / ATCC 700720).